The following is a 314-amino-acid chain: Deoxymugineic acid synthase 1 (314 aa).

Asp44 lines the NADP(+) pocket. Tyr49 (proton donor) is an active-site residue. Substrate is bound at residue His112. Residues 158-159 (CN), Gln180, 258-266 (FDEGRMKEN), and 273-281 (ELSEEERQR) each bind NADP(+).

Belongs to the aldo/keto reductase family.

The enzyme catalyses 2'-deoxymugineate + NAD(+) = 3''-deamino-3''-oxonicotianamine + NADH + H(+). It carries out the reaction 2'-deoxymugineate + NADP(+) = 3''-deamino-3''-oxonicotianamine + NADPH + H(+). It functions in the pathway siderophore biosynthesis. Functionally, catalyzes the reduction of a 3''-keto intermediate during the biosynthesis of 2'-deoxymugineic acid (DMA) from L-Met. Involved in the formation of phytosiderophores (MAs) belonging to the mugineic acid family and required to acquire iron. This chain is Deoxymugineic acid synthase 1, found in Zea mays (Maize).